Reading from the N-terminus, the 134-residue chain is Terepressin/terephysin (134 aa).

An N-terminal signal peptide occupies residues 1–33 (MKCSVLPRSRLSWTMCVLLLPLLMLMLEGGVQG). Cysteine 34 and cysteine 39 form a disulfide bridge. Residues 44–50 (KRAVDSV) constitute a propeptide that is removed on maturation. 7 cysteine pairs are disulfide-bonded: cysteine 56-cysteine 100, cysteine 59-cysteine 73, cysteine 67-cysteine 90, cysteine 74-cysteine 80, cysteine 107-cysteine 121, cysteine 115-cysteine 133, and cysteine 122-cysteine 127.

This sequence belongs to the vasopressin/oxytocin family. In terms of processing, contains 7 disulfide bonds. In terms of tissue distribution, expressed by the venom duct.

The protein resides in the secreted. The polypeptide is Terepressin/terephysin (Terebra subulata (Chocolate spotted auger)).